Consider the following 360-residue polypeptide: Phospho-N-acetylmuramoyl-pentapeptide-transferase (360 aa).

10 consecutive transmembrane segments (helical) span residues 27–47 (GAFLTALIFGFVFGKPLINVL), 69–89 (VGTPTMGGLLIVGALLFSTLM), 93–113 (WDNPFVWLVLFVTMSFGLIGF), 134–154 (LLLGFVIAIVAALWASWNHPA), 168–188 (VLLNLGYLYVPFCICVIVGAA), 199–219 (GLAIMPVMIAAGTLGIIAYAV), 239–259 (ILIFTSALFGGGLGFLWYNAP), 262–282 (AVFMGDTGSLALGGALGAIAI), 288–308 (LVLAIVGGLFVVEALSVIIQV), and 337–357 (TIVIRFWIISLILAMIGLATL).

It belongs to the glycosyltransferase 4 family. MraY subfamily. It depends on Mg(2+) as a cofactor.

It is found in the cell inner membrane. The catalysed reaction is UDP-N-acetyl-alpha-D-muramoyl-L-alanyl-gamma-D-glutamyl-meso-2,6-diaminopimeloyl-D-alanyl-D-alanine + di-trans,octa-cis-undecaprenyl phosphate = di-trans,octa-cis-undecaprenyl diphospho-N-acetyl-alpha-D-muramoyl-L-alanyl-D-glutamyl-meso-2,6-diaminopimeloyl-D-alanyl-D-alanine + UMP. It functions in the pathway cell wall biogenesis; peptidoglycan biosynthesis. Catalyzes the initial step of the lipid cycle reactions in the biosynthesis of the cell wall peptidoglycan: transfers peptidoglycan precursor phospho-MurNAc-pentapeptide from UDP-MurNAc-pentapeptide onto the lipid carrier undecaprenyl phosphate, yielding undecaprenyl-pyrophosphoryl-MurNAc-pentapeptide, known as lipid I. The sequence is that of Phospho-N-acetylmuramoyl-pentapeptide-transferase from Ruegeria sp. (strain TM1040) (Silicibacter sp.).